The primary structure comprises 212 residues: MSKLLYIEASPRKNKSFSTRVAQSFINTFLDADPANRIETLDLWDFPLPEVDGSYLSAKYKILHWQDPTEAEARAWTEIANIVSQFKDADSYLFSIPMWNFSIPYKLKHFIDIITQPGLTFMFSPESGYQGLVTGKACTVIYARGAQYRGTKGSTLDFQKTYMELLLSFIGFENIHSIRVEPTLTDSASRERVLATAKLEAISLAKELYSLI.

Residues Ser10, 16-18 (SFS), and 98-101 (MWNF) each bind FMN.

This sequence belongs to the azoreductase type 1 family. In terms of assembly, homodimer. The cofactor is FMN.

The catalysed reaction is 2 a quinone + NADH + H(+) = 2 a 1,4-benzosemiquinone + NAD(+). It catalyses the reaction N,N-dimethyl-1,4-phenylenediamine + anthranilate + 2 NAD(+) = 2-(4-dimethylaminophenyl)diazenylbenzoate + 2 NADH + 2 H(+). Functionally, quinone reductase that provides resistance to thiol-specific stress caused by electrophilic quinones. Also exhibits azoreductase activity. Catalyzes the reductive cleavage of the azo bond in aromatic azo compounds to the corresponding amines. This chain is FMN-dependent NADH:quinone oxidoreductase, found in Desulfotalea psychrophila (strain LSv54 / DSM 12343).